Consider the following 336-residue polypeptide: UPF0324 membrane protein BT_1919 (336 aa).

The next 8 helical transmembrane spans lie at 2-19 (LHGV…FYIG), 23-45 (FVRS…YANS), 85-107 (IGLP…GIYL), 117-134 (IALL…AAIL), 147-169 (TAVS…PFLY), 210-232 (AIIV…TYLV), 253-275 (WFAI…AQLV), and 310-332 (FVLA…KYLT).

It belongs to the UPF0324 family.

Its subcellular location is the cell membrane. This Bacteroides thetaiotaomicron (strain ATCC 29148 / DSM 2079 / JCM 5827 / CCUG 10774 / NCTC 10582 / VPI-5482 / E50) protein is UPF0324 membrane protein BT_1919.